We begin with the raw amino-acid sequence, 426 residues long: Adenylosuccinate synthetase (426 aa).

Residues 12 to 18 and 40 to 42 contribute to the GTP site; these read GDEGKGK and GHT. The active-site Proton acceptor is aspartate 13. The Mg(2+) site is built by aspartate 13 and glycine 40. Residues 13–16, 38–41, threonine 131, arginine 145, glutamine 226, threonine 241, and arginine 305 contribute to the IMP site; these read DEGK and NAGH. Histidine 41 (proton donor) is an active-site residue. 301-307 lines the substrate pocket; sequence ATTGRKR. GTP is bound by residues arginine 307, 333 to 335, and 415 to 417; these read KLD and SVG.

It belongs to the adenylosuccinate synthetase family. In terms of assembly, homodimer. It depends on Mg(2+) as a cofactor.

Its subcellular location is the cytoplasm. The catalysed reaction is IMP + L-aspartate + GTP = N(6)-(1,2-dicarboxyethyl)-AMP + GDP + phosphate + 2 H(+). The protein operates within purine metabolism; AMP biosynthesis via de novo pathway; AMP from IMP: step 1/2. In terms of biological role, plays an important role in the de novo pathway of purine nucleotide biosynthesis. Catalyzes the first committed step in the biosynthesis of AMP from IMP. This is Adenylosuccinate synthetase from Nitratidesulfovibrio vulgaris (strain ATCC 29579 / DSM 644 / CCUG 34227 / NCIMB 8303 / VKM B-1760 / Hildenborough) (Desulfovibrio vulgaris).